Here is a 513-residue protein sequence, read N- to C-terminus: Alanine--glyoxylate aminotransferase 2, mitochondrial (513 aa).

Residues 1 to 40 constitute a mitochondrion transit peptide; it reads MSLAWRNLQKPFYLETSLRILQMRPSLSLGASRIAVPKLT. Lysine 56 carries the N6-acetyllysine modification. Lysine 70 carries the N6-acetyllysine; alternate modification. The residue at position 70 (lysine 70) is an N6-succinyllysine; alternate. Residue lysine 83 is modified to N6-acetyllysine. Position 261 is an N6-acetyllysine; alternate (lysine 261). Lysine 261 is modified (N6-succinyllysine; alternate). Residue lysine 303 is modified to N6-succinyllysine. The residue at position 349 (lysine 349) is an N6-(pyridoxal phosphate)lysine. An N6-acetyllysine; alternate mark is found at lysine 416 and lysine 419. Residues lysine 416 and lysine 419 each carry the N6-succinyllysine; alternate modification. An N6-acetyllysine modification is found at lysine 453.

It belongs to the class-III pyridoxal-phosphate-dependent aminotransferase family. Homotetramer. Pyridoxal 5'-phosphate is required as a cofactor. In terms of tissue distribution, expressed in the liver and kidney.

It localises to the mitochondrion. The enzyme catalyses glyoxylate + L-alanine = glycine + pyruvate. It catalyses the reaction (R)-3-amino-2-methylpropanoate + pyruvate = 2-methyl-3-oxopropanoate + L-alanine. It carries out the reaction 3-oxopropanoate + L-alanine = beta-alanine + pyruvate. The catalysed reaction is 2-oxobutanoate + L-alanine = (2S)-2-aminobutanoate + pyruvate. The enzyme catalyses N(omega),N(omega)-dimethyl-L-arginine + pyruvate = 5-(3,3-dimethylguanidino)-2-oxopentanoate + L-alanine. It catalyses the reaction N(omega),N('omega)-dimethyl-L-arginine + pyruvate = 5-(3,3'-dimethylguanidino)-2-oxopentanoate + L-alanine. It carries out the reaction N(omega),N(omega)-dimethyl-L-arginine + glyoxylate = 5-(3,3-dimethylguanidino)-2-oxopentanoate + glycine. The catalysed reaction is N(omega),N('omega)-dimethyl-L-arginine + glyoxylate = 5-(3,3'-dimethylguanidino)-2-oxopentanoate + glycine. The enzyme catalyses N(omega)-methyl-L-arginine + pyruvate = 5-(3-methylguanidino)-2-oxopentanoate + L-alanine. It catalyses the reaction N(omega)-methyl-L-arginine + glyoxylate = 5-(3-methylguanidino)-2-oxopentanoate + glycine. It carries out the reaction L-ornithine + pyruvate = 5-amino-2-oxopentanoate + L-alanine. The catalysed reaction is L-ornithine + glyoxylate = 5-amino-2-oxopentanoate + glycine. The enzyme catalyses (2S)-2-aminobutanoate + glyoxylate = 2-oxobutanoate + glycine. It catalyses the reaction N(omega),N(omega)-dimethyl-L-arginine + oxaloacetate = 5-(3,3-dimethylguanidino)-2-oxopentanoate + L-aspartate. It carries out the reaction oxaloacetate + L-alanine = L-aspartate + pyruvate. The catalysed reaction is N(omega),N(omega)-dimethyl-L-arginine + 2-oxobutanoate = 5-(3,3-dimethylguanidino)-2-oxopentanoate + (2S)-2-aminobutanoate. The enzyme catalyses 2-oxopentanoate + N(omega),N(omega)-dimethyl-L-arginine = 5-(3,3-dimethylguanidino)-2-oxopentanoate + L-2-aminopentanoate. It catalyses the reaction 2-oxohexanoate + N(omega),N(omega)-dimethyl-L-arginine = L-2-aminohexanoate + 5-(3,3-dimethylguanidino)-2-oxopentanoate. (R)-3-amino-2-methylpropionate--pyruvate transaminase and beta-alanine-pyruvate aminotransferase are inhibited by aminooxyacetic acid. Its function is as follows. Multifunctional aminotransferase with a broad substrate specificity. Catalyzes the conversion of glyoxylate to glycine using alanine as the amino donor. Catalyzes metabolism of not L- but the D-isomer of D-beta-aminoisobutyric acid to generate 2-methyl-3-oxopropanoate and alanine. Catalyzes the transfer of the amino group from beta-alanine to pyruvate to yield L-alanine and 3-oxopropanoate. Can metabolize NG-monomethyl-L-arginine (NMMA), asymmetric NG,NG-dimethyl-L-arginine (ADMA) and symmetric NG,N'G-dimethyl-L-arginine (SDMA). ADMA is a potent inhibitor of nitric-oxide (NO) synthase, and this activity provides mechanism through which the kidney regulates blood pressure. The polypeptide is Alanine--glyoxylate aminotransferase 2, mitochondrial (Agxt2) (Mus musculus (Mouse)).